The following is a 616-amino-acid chain: Dihydroxy-acid dehydratase (616 aa).

Residue aspartate 81 coordinates Mg(2+). Cysteine 122 provides a ligand contact to [2Fe-2S] cluster. Mg(2+) is bound by residues aspartate 123 and lysine 124. Lysine 124 is modified (N6-carboxylysine). Residue cysteine 195 participates in [2Fe-2S] cluster binding. Glutamate 491 lines the Mg(2+) pocket. Residue serine 517 is the Proton acceptor of the active site.

It belongs to the IlvD/Edd family. Homodimer. Requires [2Fe-2S] cluster as cofactor. Mg(2+) is required as a cofactor.

It catalyses the reaction (2R)-2,3-dihydroxy-3-methylbutanoate = 3-methyl-2-oxobutanoate + H2O. The catalysed reaction is (2R,3R)-2,3-dihydroxy-3-methylpentanoate = (S)-3-methyl-2-oxopentanoate + H2O. It functions in the pathway amino-acid biosynthesis; L-isoleucine biosynthesis; L-isoleucine from 2-oxobutanoate: step 3/4. It participates in amino-acid biosynthesis; L-valine biosynthesis; L-valine from pyruvate: step 3/4. Functions in the biosynthesis of branched-chain amino acids. Catalyzes the dehydration of (2R,3R)-2,3-dihydroxy-3-methylpentanoate (2,3-dihydroxy-3-methylvalerate) into 2-oxo-3-methylpentanoate (2-oxo-3-methylvalerate) and of (2R)-2,3-dihydroxy-3-methylbutanoate (2,3-dihydroxyisovalerate) into 2-oxo-3-methylbutanoate (2-oxoisovalerate), the penultimate precursor to L-isoleucine and L-valine, respectively. In Methylobacillus flagellatus (strain ATCC 51484 / DSM 6875 / VKM B-1610 / KT), this protein is Dihydroxy-acid dehydratase.